The chain runs to 54 residues: UPF0391 membrane protein Bpro_0879 (54 aa).

2 helical membrane-spanning segments follow: residues 6 to 26 (VVFL…IAAG) and 30 to 50 (IAKI…VMGL).

The protein belongs to the UPF0391 family.

Its subcellular location is the cell membrane. This is UPF0391 membrane protein Bpro_0879 from Polaromonas sp. (strain JS666 / ATCC BAA-500).